A 274-amino-acid polypeptide reads, in one-letter code: MRLCGFEAGLDKPLFLIAGPCVIESEELALETAGYLKEMCSQLNIPFIYKSSFDKANRSSISSYRGPGFEKGLSILEKVKSQIGVPVLTDVHEDTPLFEVSSVVDVLQTPAFLCRQTNFIQKVAAMNKPVNIKKGQFLAPWEMKHVIAKAKAQGNEQIMACERGVSFGYNNLVSDMRSLVIMRETGCPVVYDATHSVQLPGGNNGVSGGQREFIPALARAAVAVGISGLFMETHPDPDKALSDGPNSWPLDKMKQLLESLKAADEVYKKYSTDF.

It belongs to the KdsA family.

It is found in the cytoplasm. It carries out the reaction D-arabinose 5-phosphate + phosphoenolpyruvate + H2O = 3-deoxy-alpha-D-manno-2-octulosonate-8-phosphate + phosphate. It participates in carbohydrate biosynthesis; 3-deoxy-D-manno-octulosonate biosynthesis; 3-deoxy-D-manno-octulosonate from D-ribulose 5-phosphate: step 2/3. The protein operates within bacterial outer membrane biogenesis; lipopolysaccharide biosynthesis. The sequence is that of 2-dehydro-3-deoxyphosphooctonate aldolase from Legionella pneumophila (strain Corby).